The primary structure comprises 188 residues: Probable nicotinate-nucleotide adenylyltransferase (188 aa).

Belongs to the NadD family.

It carries out the reaction nicotinate beta-D-ribonucleotide + ATP + H(+) = deamido-NAD(+) + diphosphate. It functions in the pathway cofactor biosynthesis; NAD(+) biosynthesis; deamido-NAD(+) from nicotinate D-ribonucleotide: step 1/1. Its function is as follows. Catalyzes the reversible adenylation of nicotinate mononucleotide (NaMN) to nicotinic acid adenine dinucleotide (NaAD). This is Probable nicotinate-nucleotide adenylyltransferase from Listeria innocua serovar 6a (strain ATCC BAA-680 / CLIP 11262).